Reading from the N-terminus, the 210-residue chain is Large ribosomal subunit protein bL25 (210 aa).

Residues 175-210 are disordered; that stretch reads IATILPPQQEEEIDSGEQQEAGQPDAAEGRETTPEE. The span at 201–210 shows a compositional bias: basic and acidic residues; it reads AEGRETTPEE.

Belongs to the bacterial ribosomal protein bL25 family. CTC subfamily. As to quaternary structure, part of the 50S ribosomal subunit; part of the 5S rRNA/L5/L18/L25 subcomplex. Contacts the 5S rRNA. Binds to the 5S rRNA independently of L5 and L18.

Functionally, this is one of the proteins that binds to the 5S RNA in the ribosome where it forms part of the central protuberance. This Geobacillus kaustophilus (strain HTA426) protein is Large ribosomal subunit protein bL25.